The following is a 144-amino-acid chain: Large ribosomal subunit protein uL15 (144 aa).

The interval 20–49 (GRGIGSGLGKTGGRGHKGQKSRSGGFHKVG) is disordered. Gly residues predominate over residues 21–31 (RGIGSGLGKTG).

The protein belongs to the universal ribosomal protein uL15 family. In terms of assembly, part of the 50S ribosomal subunit.

Its function is as follows. Binds to the 23S rRNA. This Neisseria meningitidis serogroup A / serotype 4A (strain DSM 15465 / Z2491) protein is Large ribosomal subunit protein uL15.